A 150-amino-acid chain; its full sequence is MAGETSFKYIVRIAGVDIDGDLKLPYGLASIKGIGYTTAMAVIRMLGLDPEKKVGFLTEEEIRRLDEVLRDITQLGLPKWLYNRRKDYETGKDLHLIGSELIFYARRDIEREMKIGSWRGIRHKYGLKVRGQRTRTTGRLGMTIGVRKKR.

Belongs to the universal ribosomal protein uS13 family. In terms of assembly, part of the 30S ribosomal subunit. Forms a loose heterodimer with protein S19. Forms two bridges to the 50S subunit in the 70S ribosome.

In terms of biological role, located at the top of the head of the 30S subunit, it contacts several helices of the 16S rRNA. In the 70S ribosome it contacts the 23S rRNA (bridge B1a) and protein L5 of the 50S subunit (bridge B1b), connecting the 2 subunits; these bridges are implicated in subunit movement. This is Small ribosomal subunit protein uS13 from Aeropyrum pernix (strain ATCC 700893 / DSM 11879 / JCM 9820 / NBRC 100138 / K1).